The sequence spans 405 residues: Arginine biosynthesis bifunctional protein ArgJ (405 aa).

Residues Met-1 to Ser-18 are compositionally biased toward polar residues. The disordered stretch occupies residues Met-1 to Leu-21. 6 residues coordinate substrate: Thr-167, Lys-189, Thr-200, Glu-281, Asn-400, and Thr-405. Thr-200 acts as the Nucleophile in catalysis.

This sequence belongs to the ArgJ family. Heterotetramer of two alpha and two beta chains.

It is found in the cytoplasm. The enzyme catalyses N(2)-acetyl-L-ornithine + L-glutamate = N-acetyl-L-glutamate + L-ornithine. It catalyses the reaction L-glutamate + acetyl-CoA = N-acetyl-L-glutamate + CoA + H(+). It functions in the pathway amino-acid biosynthesis; L-arginine biosynthesis; L-ornithine and N-acetyl-L-glutamate from L-glutamate and N(2)-acetyl-L-ornithine (cyclic): step 1/1. It participates in amino-acid biosynthesis; L-arginine biosynthesis; N(2)-acetyl-L-ornithine from L-glutamate: step 1/4. In terms of biological role, catalyzes two activities which are involved in the cyclic version of arginine biosynthesis: the synthesis of N-acetylglutamate from glutamate and acetyl-CoA as the acetyl donor, and of ornithine by transacetylation between N(2)-acetylornithine and glutamate. The sequence is that of Arginine biosynthesis bifunctional protein ArgJ from Corynebacterium jeikeium (strain K411).